Here is a 253-residue protein sequence, read N- to C-terminus: Large ribosomal subunit protein uL4 (253 aa).

The tract at residues 78–107 (SRAARVPHAKGGRRAHPPKPEADRSEKVNT) is disordered. Basic residues predominate over residues 82-94 (RVPHAKGGRRAHP). Positions 95–107 (PKPEADRSEKVNT) are enriched in basic and acidic residues.

It belongs to the universal ribosomal protein uL4 family. Part of the 50S ribosomal subunit.

Functionally, one of the primary rRNA binding proteins, this protein initially binds near the 5'-end of the 23S rRNA. It is important during the early stages of 50S assembly. It makes multiple contacts with different domains of the 23S rRNA in the assembled 50S subunit and ribosome. In terms of biological role, forms part of the polypeptide exit tunnel. The sequence is that of Large ribosomal subunit protein uL4 from Methanosarcina acetivorans (strain ATCC 35395 / DSM 2834 / JCM 12185 / C2A).